Reading from the N-terminus, the 444-residue chain is Glutamate--tRNA ligase 1 (444 aa).

Positions 10 to 20 (PSPTGRLHLGN) match the 'HIGH' region motif. Positions 241–245 (GLSKR) match the 'KMSKS' region motif. Lys244 provides a ligand contact to ATP.

This sequence belongs to the class-I aminoacyl-tRNA synthetase family. Glutamate--tRNA ligase type 1 subfamily. Monomer.

It is found in the cytoplasm. The enzyme catalyses tRNA(Glu) + L-glutamate + ATP = L-glutamyl-tRNA(Glu) + AMP + diphosphate. Functionally, catalyzes the attachment of glutamate to tRNA(Glu) in a two-step reaction: glutamate is first activated by ATP to form Glu-AMP and then transferred to the acceptor end of tRNA(Glu). The protein is Glutamate--tRNA ligase 1 of Rhodospirillum rubrum (strain ATCC 11170 / ATH 1.1.1 / DSM 467 / LMG 4362 / NCIMB 8255 / S1).